The primary structure comprises 349 residues: DNA fragmentation factor subunit beta (349 aa).

The CIDE-N domain occupies 7 to 83 (QPKCVKLRAL…LLTAGETWHG (77 aa)). Positions 319–349 (RSRIYRPQTGSRRKQPPRKQPPRKRPPRKRQ) are disordered. A compositionally biased stretch (basic residues) spans 329–349 (SRRKQPPRKQPPRKRPPRKRQ).

Heterodimer of DFFA and DFFB. Interacts with H1-1.

The protein localises to the cytoplasm. It is found in the nucleus. Its activity is regulated as follows. Inhibited by DFFA (DFF45). Nuclease that induces DNA fragmentation and chromatin condensation during apoptosis. Degrades naked DNA and induces apoptotic morphology. In Rattus norvegicus (Rat), this protein is DNA fragmentation factor subunit beta (Dffb).